A 469-amino-acid chain; its full sequence is 6-phosphofructo-2-kinase/fructose-2,6-bisphosphatase 4 (469 aa).

Positions 1 to 249 (MASPRELTQN…YYLMNIHVTP (249 aa)) are 6-phosphofructo-2-kinase. At Ser-29 the chain carries Phosphoserine; by PKC. Residue 46 to 54 (GLPARGKTY) participates in ATP binding. Residues Arg-79 and Arg-103 each coordinate beta-D-fructose 6-phosphate. Residue Asp-129 is part of the active site. Beta-D-fructose 6-phosphate is bound by residues Thr-131 and Arg-137. Residue Cys-159 is part of the active site. Residue 168 to 173 (NIVQVK) participates in ATP binding. 3 residues coordinate beta-D-fructose 6-phosphate: Lys-173, Arg-194, and Tyr-198. The segment at 250-469 (RSIYLCRHGE…EALVTVPAHQ (220 aa)) is fructose-2,6-bisphosphatase. Arg-256 is a binding site for beta-D-fructose 2,6-bisphosphate. The Tele-phosphohistidine intermediate role is filled by His-257. Beta-D-fructose 2,6-bisphosphate is bound by residues Asn-263, Gly-269, and Arg-306. The active-site Proton donor/acceptor is Glu-326. Residues Tyr-337, Arg-351, Lys-355, Tyr-366, Gln-392, and Arg-396 each coordinate beta-D-fructose 2,6-bisphosphate. An ATP-binding site is contributed by 348-351 (FALR). Residues 392–396 (QAVMR) and Tyr-428 contribute to the ATP site. Position 444 is a phosphothreonine; by PKC (Thr-444).

In the C-terminal section; belongs to the phosphoglycerate mutase family. Homodimer. Testis.

The catalysed reaction is beta-D-fructose 2,6-bisphosphate + H2O = beta-D-fructose 6-phosphate + phosphate. It catalyses the reaction beta-D-fructose 6-phosphate + ATP = beta-D-fructose 2,6-bisphosphate + ADP + H(+). With respect to regulation, the most important regulatory mechanism of these opposing activities is by phosphorylation and dephosphorylation of the enzyme. Its function is as follows. Synthesis and degradation of fructose 2,6-bisphosphate. This is 6-phosphofructo-2-kinase/fructose-2,6-bisphosphatase 4 (Pfkfb4) from Rattus norvegicus (Rat).